Consider the following 374-residue polypeptide: Guanine nucleotide-binding protein subunit alpha-15 (374 aa).

Residues 41–374 enclose the G-alpha domain; that stretch reads GELKLLLLGP…ARYLDEINLL (334 aa). Residues 44-57 are G1 motif; the sequence is KLLLLGPGESGKST. Residues 49-56, 183-189, 208-212, 277-280, and Ala-346 contribute to the GTP site; these read GPGESGKS, LRSRMPT, DVGGQ, and NKTD. Position 56 (Ser-56) interacts with Mg(2+). A G2 motif region spans residues 181–189; that stretch reads DVLRSRMPT. Arg-186 is subject to ADP-ribosylarginine; by cholera toxin. Thr-189 provides a ligand contact to Mg(2+). The interval 204 to 213 is G3 motif; it reads LRIVDVGGQK. Residues 273–280 are G4 motif; it reads ILFLNKTD. The G5 motif stretch occupies residues 344 to 349; the sequence is TCATDT.

This sequence belongs to the G-alpha family. G(q) subfamily. As to quaternary structure, g proteins are composed of 3 units; alpha, beta and gamma. The alpha chain contains the guanine nucleotide binding site. As to expression, specifically expressed in hematopoietic cells. Expressed in epididymis (at protein level).

Its function is as follows. Guanine nucleotide-binding proteins (G proteins) are involved as modulators or transducers in various transmembrane signaling systems. This is Guanine nucleotide-binding protein subunit alpha-15 (GNA15) from Homo sapiens (Human).